The chain runs to 392 residues: Dual-specificity RNA methyltransferase RlmN (392 aa).

Glu-116 functions as the Proton acceptor in the catalytic mechanism. Residues 122–364 (EEGRGTLCVS…SPIRTPRGED (243 aa)) form the Radical SAM core domain. Cys-129 and Cys-369 form a disulfide bridge. Residues Cys-136, Cys-140, and Cys-143 each contribute to the [4Fe-4S] cluster site. Residues 195-196 (GE), Ser-227, 249-251 (SFH), and Asn-326 each bind S-adenosyl-L-methionine. Cys-369 functions as the S-methylcysteine intermediate in the catalytic mechanism.

This sequence belongs to the radical SAM superfamily. RlmN family. [4Fe-4S] cluster serves as cofactor.

Its subcellular location is the cytoplasm. The enzyme catalyses adenosine(2503) in 23S rRNA + 2 reduced [2Fe-2S]-[ferredoxin] + 2 S-adenosyl-L-methionine = 2-methyladenosine(2503) in 23S rRNA + 5'-deoxyadenosine + L-methionine + 2 oxidized [2Fe-2S]-[ferredoxin] + S-adenosyl-L-homocysteine. It catalyses the reaction adenosine(37) in tRNA + 2 reduced [2Fe-2S]-[ferredoxin] + 2 S-adenosyl-L-methionine = 2-methyladenosine(37) in tRNA + 5'-deoxyadenosine + L-methionine + 2 oxidized [2Fe-2S]-[ferredoxin] + S-adenosyl-L-homocysteine. Specifically methylates position 2 of adenine 2503 in 23S rRNA and position 2 of adenine 37 in tRNAs. m2A2503 modification seems to play a crucial role in the proofreading step occurring at the peptidyl transferase center and thus would serve to optimize ribosomal fidelity. This chain is Dual-specificity RNA methyltransferase RlmN, found in Cereibacter sphaeroides (strain ATCC 17029 / ATH 2.4.9) (Rhodobacter sphaeroides).